The primary structure comprises 466 residues: UDP-glycosyltransferase 79 (466 aa).

The active-site Proton acceptor is histidine 27. Residue histidine 27 coordinates UDP-alpha-D-glucose. Aspartate 120 acts as the Charge relay in catalysis. 11 residues coordinate UDP-alpha-D-glucose: serine 142, threonine 291, phenylalanine 343, cysteine 344, histidine 361, tryptophan 364, asparagine 365, serine 366, glutamate 369, aspartate 385, and glutamine 386. 4 residues coordinate UDP: threonine 291, phenylalanine 343, cysteine 344, and histidine 361. Positions 365, 366, and 369 each coordinate UDP.

It belongs to the UDP-glycosyltransferase family.

Involved in the detoxification of the Fusarium mycotoxin deoxynivalenol by the transfer of glucose from UDP-D-glucose to the hydroxyl group at C-3, forming deoxynivalenol-3-O-beta-D-glucoside. The chain is UDP-glycosyltransferase 79 from Oryza sativa subsp. japonica (Rice).